The primary structure comprises 506 residues: Vinckepain-1 (506 aa).

At 1–32 the chain is on the cytoplasmic side; that stretch reads MSDNIGQINFTIPGIQSLDENDTYLKINHKKT. Positions 1 to 262 are cleaved as a propeptide — activation peptide; the sequence is MSDNIGQINF…LISVDNKSKD (262 aa). The chain crosses the membrane as a helical; Signal-anchor for type II membrane protein span at residues 33–53; that stretch reads IKICAYAITAIALFFIGGVFF. Topologically, residues 54-506 are lumenal; it reads KNQAKINALD…VGSDVFFPIY (453 aa). Residues N133 and N258 are each glycosylated (N-linked (GlcNAc...) asparagine). Disulfide bonds link C284–C326, C319–C359, C344–C364, and C413–C495. C287 is a catalytic residue. An N-linked (GlcNAc...) asparagine glycan is attached at N418. Active-site residues include H419 and N470.

This sequence belongs to the peptidase C1 family.

It is found in the membrane. Cysteine protease. The sequence is that of Vinckepain-1 from Plasmodium vinckei.